The following is a 234-amino-acid chain: Viral Fc-gamma receptor-like protein IR11 (234 aa).

The first 23 residues, 1–23, serve as a signal peptide directing secretion; it reads MQTYSTPLTLVIVTSLFLFTTQG. The Ig-like V-type domain maps to 24 to 122; that stretch reads SSSNAVEPTK…VKDTGVYLLQ (99 aa). Topologically, residues 24–182 are extracellular; the sequence is SSSNAVEPTK…DLKRQWSGLS (159 aa). 3 N-linked (GlcNAc...) asparagine; by host glycosylation sites follow: Asn-57, Asn-105, and Asn-110. A helical transmembrane segment spans residues 183–203; the sequence is LHCAWVSGMMIFVGALVICFL. Over 204 to 234 the chain is Cytoplasmic; that stretch reads RSQRIGEQDAEHLRTDLDTEPLLLTVDGDLQ.

This sequence belongs to the RL11 family.

It is found in the membrane. The polypeptide is Viral Fc-gamma receptor-like protein IR11 (Homo sapiens (Human)).